The following is a 234-amino-acid chain: 2-amino-5-formylamino-6-ribosylaminopyrimidin-4(3H)-one 5'-monophosphate deformylase (234 aa).

Residues Glu-29, His-31, Asp-40, and His-109 each coordinate Fe cation.

This sequence belongs to the creatininase superfamily. FAPy deformylase family. As to quaternary structure, homodimer. Requires Fe(2+) as cofactor. Zn(2+) is required as a cofactor.

It carries out the reaction 2-amino-5-formylamino-6-(5-phospho-D-ribosylamino)pyrimidin-4(3H)-one + H2O = 2,5-diamino-6-(1-D-ribosylamino)pyrimidin-4(3H)-one 5'-phosphate + formate + H(+). It participates in cofactor biosynthesis; coenzyme F420 biosynthesis. It functions in the pathway cofactor biosynthesis; riboflavin biosynthesis. Catalyzes the hydrolysis of the formamide of 2-amino-5-formylamino-6-ribosylamino-4(3H)-pyrimidinone 5'-monophosphate (FAPy) to form 2,5-diamino-6-ribosylamino-4(3H)-pyrimidinone 5'-phosphate (APy). In Methanobrevibacter ruminantium (strain ATCC 35063 / DSM 1093 / JCM 13430 / OCM 146 / M1) (Methanobacterium ruminantium), this protein is 2-amino-5-formylamino-6-ribosylaminopyrimidin-4(3H)-one 5'-monophosphate deformylase.